We begin with the raw amino-acid sequence, 358 residues long: MFMHLEVYYYAFILMAHMKTCCGWSVNNFLMTGPKAYLIYSSSVAAGAQSGIEECKYQFAWDRWKCPERALQLSTHSGLRSANRETAFFHAISSAGVMYTLTRNCSLGDFDNCGCDDTRNGQRGGQGWLWGGCSDNVGFGEVISKQFVDALETGQDARAAMNLHNNEVGRKAVKGTMQRTCKCHGVSGSCTTQTCWLQLPEFREVGNYLKEKYHRAVKVDLLRGAGNSAASRGAIAETFNSISRKELVHLEDSPDYCLENRTLGLPGTEGRECLRKGKNLSKWEKRTCKRLCGDCGLAVEERRAETVSSCNCKFHWCCAVKCEQCRKTVTKYYCVKRSKRVKNDNASRRKSYRLKKKH.

The first 23 residues, 1–23, serve as a signal peptide directing secretion; it reads MFMHLEVYYYAFILMAHMKTCCG. Cys-55 and Cys-66 are oxidised to a cystine. Residue Asn-104 is glycosylated (N-linked (GlcNAc...) asparagine). 10 cysteine pairs are disulfide-bonded: Cys-105/Cys-113, Cys-115/Cys-133, Cys-181/Cys-195, Cys-183/Cys-190, Cys-257/Cys-295, Cys-273/Cys-288, Cys-292/Cys-334, Cys-310/Cys-325, Cys-312/Cys-322, and Cys-317/Cys-318. Ser-187 carries the O-palmitoleoyl serine lipid modification. Residues Asn-260 and Asn-279 are each glycosylated (N-linked (GlcNAc...) asparagine). Asn-345 carries N-linked (GlcNAc...) asparagine glycosylation.

This sequence belongs to the Wnt family. Palmitoleoylation is required for efficient binding to frizzled receptors. Depalmitoleoylation leads to Wnt signaling pathway inhibition. Post-translationally, proteolytic processing by tiki1 and tiki2 promotes oxidation and formation of large disulfide-bond oligomers, leading to inactivation of wnt8b. In terms of tissue distribution, hindbrain r1, 2 and 5.

It localises to the secreted. The protein localises to the extracellular space. It is found in the extracellular matrix. Its function is as follows. Ligand for fzd8a, a member of the G-protein coupled frizzled receptor family. May play a role in the establishment of polarity in the nervous system. Involved in canonical Wnt signaling pathway. During embryonic development, required for the acquisition of caudal diencephalic fate. Antagonizes eye specification. The protein is Protein Wnt-8b (wnt8b) of Danio rerio (Zebrafish).